Reading from the N-terminus, the 72-residue chain is Translation initiation factor IF-1 (72 aa).

In terms of domain architecture, S1-like spans 1–72 (MSKEENIEMQ…TKGRIIFRSR (72 aa)).

It belongs to the IF-1 family. In terms of assembly, component of the 30S ribosomal translation pre-initiation complex which assembles on the 30S ribosome in the order IF-2 and IF-3, IF-1 and N-formylmethionyl-tRNA(fMet); mRNA recruitment can occur at any time during PIC assembly.

The protein localises to the cytoplasm. In terms of biological role, one of the essential components for the initiation of protein synthesis. Stabilizes the binding of IF-2 and IF-3 on the 30S subunit to which N-formylmethionyl-tRNA(fMet) subsequently binds. Helps modulate mRNA selection, yielding the 30S pre-initiation complex (PIC). Upon addition of the 50S ribosomal subunit IF-1, IF-2 and IF-3 are released leaving the mature 70S translation initiation complex. In Buchnera aphidicola subsp. Acyrthosiphon pisum (strain APS) (Acyrthosiphon pisum symbiotic bacterium), this protein is Translation initiation factor IF-1.